Consider the following 72-residue polypeptide: Translation initiation factor IF-1 (72 aa).

Residues 1-72 (MAKEDTLEFP…TKGRINYRFK (72 aa)) enclose the S1-like domain.

This sequence belongs to the IF-1 family. Component of the 30S ribosomal translation pre-initiation complex which assembles on the 30S ribosome in the order IF-2 and IF-3, IF-1 and N-formylmethionyl-tRNA(fMet); mRNA recruitment can occur at any time during PIC assembly.

The protein localises to the cytoplasm. Functionally, one of the essential components for the initiation of protein synthesis. Stabilizes the binding of IF-2 and IF-3 on the 30S subunit to which N-formylmethionyl-tRNA(fMet) subsequently binds. Helps modulate mRNA selection, yielding the 30S pre-initiation complex (PIC). Upon addition of the 50S ribosomal subunit IF-1, IF-2 and IF-3 are released leaving the mature 70S translation initiation complex. In Roseobacter denitrificans (strain ATCC 33942 / OCh 114) (Erythrobacter sp. (strain OCh 114)), this protein is Translation initiation factor IF-1.